We begin with the raw amino-acid sequence, 726 residues long: Catalase-peroxidase (726 aa).

The disordered stretch occupies residues 1–33; it reads MSTSDDIHNTTATGKCPFHQGGHDQSAGGGTTT. The tryptophyl-tyrosyl-methioninium (Trp-Tyr) (with M-252) cross-link spans 105–226; that stretch reads WHGAGTYRSI…LGATEMGLIY (122 aa). H106 functions as the Proton acceptor in the catalytic mechanism. Residues 226–252 constitute a cross-link (tryptophyl-tyrosyl-methioninium (Tyr-Met) (with W-105)); that stretch reads YVNPEGPDHSGEPLSAAAAIRATFGNM. H267 lines the heme b pocket.

It belongs to the peroxidase family. Peroxidase/catalase subfamily. In terms of assembly, homodimer or homotetramer. Requires heme b as cofactor. Formation of the three residue Trp-Tyr-Met cross-link is important for the catalase, but not the peroxidase activity of the enzyme.

It carries out the reaction H2O2 + AH2 = A + 2 H2O. The enzyme catalyses 2 H2O2 = O2 + 2 H2O. Functionally, bifunctional enzyme with both catalase and broad-spectrum peroxidase activity. In Escherichia coli O1:K1 / APEC, this protein is Catalase-peroxidase.